The chain runs to 1338 residues: Phosphoribosylformylglycinamidine synthase (1338 aa).

The residue at position 215 (Ser215) is a Phosphoserine. Residues 322–333 (GATTGTGGRIRD) and 402–404 (AGF) contribute to the ATP site. Phosphoserine is present on Ser569. Residues Thr619 and Thr623 each carry the phosphothreonine modification. Ala706 serves as a coordination point for ATP. Mg(2+) is bound by residues Asp707, Glu746, Asn750, and Asp909. Ser911 contacts ATP. The Glutamine amidotransferase type-1 domain occupies 1064 to 1302 (RVAILREEGS…AVMPHPERAV (239 aa)). The active-site Nucleophile is the Cys1158. Residues His1297 and Glu1299 contribute to the active site.

This sequence in the N-terminal section; belongs to the FGAMS family.

It is found in the cytoplasm. It carries out the reaction N(2)-formyl-N(1)-(5-phospho-beta-D-ribosyl)glycinamide + L-glutamine + ATP + H2O = 2-formamido-N(1)-(5-O-phospho-beta-D-ribosyl)acetamidine + L-glutamate + ADP + phosphate + H(+). It functions in the pathway purine metabolism; IMP biosynthesis via de novo pathway; 5-amino-1-(5-phospho-D-ribosyl)imidazole from N(2)-formyl-N(1)-(5-phospho-D-ribosyl)glycinamide: step 1/2. Phosphoribosylformylglycinamidine synthase involved in the purines biosynthetic pathway. Catalyzes the ATP-dependent conversion of formylglycinamide ribonucleotide (FGAR) and glutamine to yield formylglycinamidine ribonucleotide (FGAM) and glutamate. The protein is Phosphoribosylformylglycinamidine synthase (PFAS) of Homo sapiens (Human).